The chain runs to 714 residues: ATP-dependent DNA helicase DinG (714 aa).

One can recognise a Helicase ATP-binding domain in the interval 17–294 (ALQDQIPDFI…TSMEQFRPKT (278 aa)). 54-61 (APTGVGKT) lines the ATP pocket. Cysteine 120, cysteine 194, cysteine 199, and cysteine 205 together coordinate [4Fe-4S] cluster. Residues 248 to 251 (DEGH) carry the DEAH box motif. Positions 517 to 698 (HIAEMAAYFR…VFPIEQPAVP (182 aa)) constitute a Helicase C-terminal domain.

This sequence belongs to the helicase family. DinG subfamily. Type 1 sub-subfamily. [4Fe-4S] cluster serves as cofactor.

The enzyme catalyses Couples ATP hydrolysis with the unwinding of duplex DNA at the replication fork by translocating in the 5'-3' direction. This creates two antiparallel DNA single strands (ssDNA). The leading ssDNA polymer is the template for DNA polymerase III holoenzyme which synthesizes a continuous strand.. It carries out the reaction ATP + H2O = ADP + phosphate + H(+). DNA-dependent ATPase and 5'-3' DNA helicase. Unwinds D-loops, R-loops, forked DNA and G-quadruplex DNA. The polypeptide is ATP-dependent DNA helicase DinG (Salmonella choleraesuis (strain SC-B67)).